The sequence spans 221 residues: Alpha-ketoglutarate-dependent dioxygenase alkB homolog 7, mitochondrial (221 aa).

The N-terminal 23 residues, Met1 to Ala23, are a transit peptide targeting the mitochondrion. His121 and Asp123 together coordinate Fe cation. A 2-oxoglutarate-binding site is contributed by Tyr165. A Fe cation-binding site is contributed by His177. 2-oxoglutarate-binding positions include Arg197–Ser199 and Arg203.

Belongs to the alkB family. Requires Fe(2+) as cofactor.

The protein localises to the mitochondrion matrix. May function as protein hydroxylase; can catalyze auto-hydroxylation at Leu-110 (in vitro), but this activity may be due to the absence of the true substrate. Required to induce programmed necrosis in response to DNA damage caused by cytotoxic alkylating agents. Acts by triggering the collapse of mitochondrial membrane potential and loss of mitochondrial function that leads to energy depletion and cell death. ALKBH7-mediated necrosis is probably required to prevent the accumulation of cells with DNA damage. Does not display DNA demethylase activity. Involved in fatty acid metabolism. The protein is Alpha-ketoglutarate-dependent dioxygenase alkB homolog 7, mitochondrial (ALKBH7) of Bos taurus (Bovine).